Reading from the N-terminus, the 438-residue chain is DNA primase small subunit (438 aa).

Catalysis depends on residues E63, D127, and D129. The Zinc knuckle motif motif lies at 139-149 (CCSGAGVCLKC).

Belongs to the eukaryotic-type primase small subunit family. Heterodimer of a catalytic subunit Prim1 and a regulatory subunit Prim2, also known as the DNA primase complex. Component of the alpha DNA polymerase complex (also known as the alpha DNA polymerase-primase complex) consisting of four subunits: the catalytic subunit PolA1, the regulatory subunit PolA2, and the primase complex subunits Prim1 and Prim2 respectively. PolA1 associates with the DNA primase complex before association with PolA2. It depends on Mg(2+) as a cofactor. Requires Mn(2+) as cofactor. Expressed in embryos (at protein level).

Its activity is regulated as follows. The presence of the regulatory subunit Prim2 accelerates the kinetics of initiation and primer extension. In terms of biological role, catalytic subunit of the DNA primase complex and component of the DNA polymerase alpha complex (also known as the alpha DNA polymerase-primase complex) which play an essential role in the initiation of DNA synthesis. During the S phase of the cell cycle, the DNA polymerase alpha complex (composed of a catalytic subunit PolA1, an accessory subunit PolA2 and two primase subunits, the catalytic subunit Prim1 and the regulatory subunit Prim2) is recruited to DNA at the replicative forks. The primase subunit of the polymerase alpha complex initiates DNA synthesis by oligomerising short RNA primers on both leading and lagging strands. These primers are initially extended by the polymerase alpha catalytic subunit and subsequently transferred to polymerase delta and polymerase epsilon for processive synthesis on the lagging and leading strand, respectively. In the primase complex, both subunits are necessary for the initial di-nucleotide formation, but the extension of the primer depends only on the catalytic subunit. Can add both ribo- and deoxynucleotides during elongation of the primers. Binds single stranded DNA. This Drosophila melanogaster (Fruit fly) protein is DNA primase small subunit.